Here is a 216-residue protein sequence, read N- to C-terminus: CDP-diacylglycerol--glycerol-3-phosphate 3-phosphatidyltransferase (216 aa).

The next 4 membrane-spanning stretches (helical) occupy residues 40–60 (VVSI…FLDG), 88–108 (VMLC…CILY), 141–161 (MGAV…LAGA), and 176–196 (VVPV…FFPI).

Belongs to the CDP-alcohol phosphatidyltransferase class-I family.

Its subcellular location is the cell membrane. The catalysed reaction is a CDP-1,2-diacyl-sn-glycerol + sn-glycerol 3-phosphate = a 1,2-diacyl-sn-glycero-3-phospho-(1'-sn-glycero-3'-phosphate) + CMP + H(+). Its pathway is phospholipid metabolism; phosphatidylglycerol biosynthesis; phosphatidylglycerol from CDP-diacylglycerol: step 1/2. Its function is as follows. This protein catalyzes the committed step to the synthesis of the acidic phospholipids. In Treponema pallidum (strain Nichols), this protein is CDP-diacylglycerol--glycerol-3-phosphate 3-phosphatidyltransferase (pgsA).